Consider the following 557-residue polypeptide: 6-methylpretetramide 4-monooxygenase (557 aa).

FAD is bound by residues 9-38 (QVLI…VIDR) and 278-288 (MRSGRCFVAGD). Residues 530–557 (LPEDTAPGAGDSAGRPAPDGTRRGVTTE) are disordered.

This sequence belongs to the PheA/TfdB FAD monooxygenase family. FAD is required as a cofactor.

The enzyme catalyses 6-methylpretetramide + NADPH + O2 + 2 H(+) = 4-hydroxy-6-methylpretetramide + NADP(+) + H2O. The catalysed reaction is 4-hydroxy-6-methylpretetramide + NADPH + O2 = 4-dedimethylamino-4-oxo-anhydrotetracycline + NADP(+) + H2O. Its pathway is antibiotic biosynthesis; oxytetracycline biosynthesis. Functionally, involved in the biosynthesis of the tetracycline antibiotic, oxytetracycline. Catalyzes the double hydroxylation of 6-methylpretetramide to yield 4-keto-anhydrotetracycline, via the insertion of oxygen atoms at the C-12a and C-4 positions of 6-pretetramid. In Streptomyces rimosus, this protein is 6-methylpretetramide 4-monooxygenase.